Consider the following 101-residue polypeptide: Integration host factor subunit alpha (101 aa).

This sequence belongs to the bacterial histone-like protein family. Heterodimer of an alpha and a beta chain.

Its function is as follows. This protein is one of the two subunits of integration host factor, a specific DNA-binding protein that functions in genetic recombination as well as in transcriptional and translational control. The chain is Integration host factor subunit alpha from Alkalilimnicola ehrlichii (strain ATCC BAA-1101 / DSM 17681 / MLHE-1).